The primary structure comprises 113 residues: LSM complex subunit lsm7 (113 aa).

The segment covering 1–17 (MSSLQKRPGPGNSSQPT) has biased composition (polar residues). The interval 1–23 (MSSLQKRPGPGNSSQPTERPRKE) is disordered. The Sm domain occupies 23–102 (ESILDLSRYQ…LVLIAPMDGS (80 aa)).

Belongs to the snRNP Sm proteins family. In terms of assembly, component of the heptameric LSM1-LSM7 complex that forms a seven-membered ring structure with a donut shape. The LSm subunits are arranged in the order lsm1, lsm2, lsm3, lsm6, lsm5, lsm7 and lsm4. Component of the heptameric LSM2-LSM8 complex that forms a seven-membered ring structure with a donut shape. The LSm subunits are arranged in the order lsm8, lsm2, lsm3, lsm6, lsm5, lsm7 and lsm4.

It is found in the cytoplasm. Its subcellular location is the nucleus. Functionally, component of LSm protein complexes, which are involved in RNA processing and may function in a chaperone-like manner. Component of the cytoplasmic LSM1-LSM7 complex which is involved in mRNA degradation by activating the decapping step. The LSM1-LSM7 complex loads onto the 3'-end of single stranded RNA. Component of the nuclear LSM2-LSM8 complex, which is involved in spliceosome assembly. The LSM2-LSM8 complex plays a role in the biogenesis of the spliceosomal U4/U6-U5 tri-snRNP complex by accelerating prp24-mediated annealing of U4/U6 di-snRNA. The LSM2-LSM8 complex binds U6 snRNA terminating with a cyclic 2',3' phosphate group; RNA with an unmodified 3' hydroxyl or non-cyclic 3' phosphate is bound less tightly. In Schizosaccharomyces pombe (strain 972 / ATCC 24843) (Fission yeast), this protein is LSM complex subunit lsm7 (lsm7).